The following is a 156-amino-acid chain: Protein archease-like (156 aa).

Residues Asp25, Asp155, and Ile156 each contribute to the Ca(2+) site.

The protein belongs to the archease family.

Its function is as follows. Component of the tRNA-splicing ligase complex required to facilitate the enzymatic turnover of catalytic subunit RtcB. Plays an important role in a RNA repair and splicing pathway which controls axon regeneration in response to peripheral (PNS) and central nervous system (CNS) injury, by activating splicing of Xbp1 to promote axon regeneration in response to axotomy. This Drosophila melanogaster (Fruit fly) protein is Protein archease-like.